The primary structure comprises 414 residues: Serine/threonine transporter SstT (414 aa).

Helical transmembrane passes span 16–36 (GSLV…AWVS), 46–66 (LGTL…LMLV), 84–104 (ILFL…VFSF), 143–163 (ALLN…GFAL), 180–200 (AVTF…FGLV), 219–239 (LVVL…LLVF), 300–320 (MAGA…TLGV), and 332–352 (VVAS…LLLI).

It belongs to the dicarboxylate/amino acid:cation symporter (DAACS) (TC 2.A.23) family.

It is found in the cell inner membrane. It catalyses the reaction L-serine(in) + Na(+)(in) = L-serine(out) + Na(+)(out). The catalysed reaction is L-threonine(in) + Na(+)(in) = L-threonine(out) + Na(+)(out). Functionally, involved in the import of serine and threonine into the cell, with the concomitant import of sodium (symport system). The chain is Serine/threonine transporter SstT from Salmonella arizonae (strain ATCC BAA-731 / CDC346-86 / RSK2980).